Reading from the N-terminus, the 491-residue chain is Serine/threonine-protein kinase 33 (491 aa).

The interval 51–89 is disordered; sequence FASQERKKERNTSRESSLKDLSIRTSNVERKPQAQWSRS. Basic and acidic residues predominate over residues 54-82; sequence QERKKERNTSRESSLKDLSIRTSNVERKP. The 267-residue stretch at 111 to 377 folds into the Protein kinase domain; sequence YTFGRILGQG…AKELLDNQWL (267 aa). ATP contacts are provided by residues 117–125 and Lys140; that span reads LGQGSFGMV. Asp233 (proton acceptor) is an active-site residue. Residues 398-491 form a disordered region; sequence KNNPESDEET…TTLFRGKKRL (94 aa). The segment covering 402-414 has biased composition (acidic residues); that stretch reads ESDEETNTDEETE. Ser403 is subject to Phosphoserine. Over residues 415-431 the composition is skewed to polar residues; it reads QSAVYSPSANTAKQPTN. The span at 445–457 shows a compositional bias: low complexity; the sequence is SSNSSSSKLLSAE. Positions 475 to 484 are enriched in polar residues; sequence AKTTLKSTTL.

This sequence belongs to the protein kinase superfamily. CAMK Ser/Thr protein kinase family. CaMK subfamily. As to quaternary structure, homodimer. Autophosphorylated. In terms of tissue distribution, highly expressed in testis, particularly in cells from the spermatogenic epithelia. Present in meiotic and post meiotic sperm cells. Significant expression is detected in lung epithelia, alveolar macrophages, horizontal cells in the retina and in embryonic organs such as heart, brain and spinal cord. Also expressed in pituitary gland, kidney, pancreas, trachea and thyroid gland.

It localises to the cytoplasm. It is found in the cytoskeleton. The protein resides in the perinuclear region. The catalysed reaction is L-seryl-[protein] + ATP = O-phospho-L-seryl-[protein] + ADP + H(+). It catalyses the reaction L-threonyl-[protein] + ATP = O-phospho-L-threonyl-[protein] + ADP + H(+). With respect to regulation, specifically inhibited by CDD-2807 ((3-([1,1'-Biphenyl]-2-ylethynyl)-1H-indazol-5-yl)(2,6-diazaspiro[3.5]nonan-2-yl)methanone). CDD-2807 is a potential male contraceptive drug: it is not toxic, efficiently crosses the blood-testis barrier and induces a reversible contraceptive effect in male mice. In terms of biological role, serine/threonine protein kinase required for spermatid differentiation and male fertility. Promotes sperm flagella assembly during spermatogenesis by mediating phosphorylation of fibrous sheath proteins AKAP3 and AKAP4. Also phosphorylates vimentin/VIM, thereby regulating the dynamic behavior of the intermediate filament cytoskeleton. This chain is Serine/threonine-protein kinase 33, found in Mus musculus (Mouse).